Consider the following 317-residue polypeptide: tRNA dimethylallyltransferase (317 aa).

14-21 (GPTAVGKT) lines the ATP pocket. 16–21 (TAVGKT) serves as a coordination point for substrate. Positions 39–42 (DSMQ) are interaction with substrate tRNA.

It belongs to the IPP transferase family. Monomer. Requires Mg(2+) as cofactor.

The catalysed reaction is adenosine(37) in tRNA + dimethylallyl diphosphate = N(6)-dimethylallyladenosine(37) in tRNA + diphosphate. In terms of biological role, catalyzes the transfer of a dimethylallyl group onto the adenine at position 37 in tRNAs that read codons beginning with uridine, leading to the formation of N6-(dimethylallyl)adenosine (i(6)A). This is tRNA dimethylallyltransferase from Bacillus cereus (strain AH820).